Here is a 186-residue protein sequence, read N- to C-terminus: uncharacterized protein (186 aa).

This is an uncharacterized protein from Acanthamoeba polyphaga (Amoeba).